Here is a 240-residue protein sequence, read N- to C-terminus: Putative outer membrane protein RT0057 (240 aa).

Positions 1 to 20 (MLKKLCVILFISSITINSHA) are cleaved as a signal peptide.

This sequence belongs to the OmpW/AlkL family.

The protein localises to the cell outer membrane. This is Putative outer membrane protein RT0057 from Rickettsia typhi (strain ATCC VR-144 / Wilmington).